The chain runs to 932 residues: Valine--tRNA ligase (932 aa).

The 'HIGH' region signature appears at 75–85 (PNVTGQLHMGH). The short motif at 568-572 (KMSKS) is the 'KMSKS' region element. Residue Lys571 participates in ATP binding. Residues 863-929 (TVDVAAERKR…ERITARLEGL (67 aa)) adopt a coiled-coil conformation.

Belongs to the class-I aminoacyl-tRNA synthetase family. ValS type 1 subfamily. As to quaternary structure, monomer.

It localises to the cytoplasm. It catalyses the reaction tRNA(Val) + L-valine + ATP = L-valyl-tRNA(Val) + AMP + diphosphate. Catalyzes the attachment of valine to tRNA(Val). As ValRS can inadvertently accommodate and process structurally similar amino acids such as threonine, to avoid such errors, it has a 'posttransfer' editing activity that hydrolyzes mischarged Thr-tRNA(Val) in a tRNA-dependent manner. This is Valine--tRNA ligase from Corynebacterium jeikeium (strain K411).